The primary structure comprises 747 residues: DNA ligase (747 aa).

NAD(+)-binding positions include 33–37, 83–84, and glutamate 113; these read DEEYD and SL. The active-site N6-AMP-lysine intermediate is lysine 115. NAD(+) contacts are provided by arginine 136, glutamate 174, lysine 299, and lysine 323. Positions 417, 420, 436, and 442 each coordinate Zn(2+). Residues 659 to 747 enclose the BRCT domain; the sequence is TGGGVLSGLT…GPGALPEVAE (89 aa).

It belongs to the NAD-dependent DNA ligase family. LigA subfamily. It depends on Mg(2+) as a cofactor. The cofactor is Mn(2+).

The enzyme catalyses NAD(+) + (deoxyribonucleotide)n-3'-hydroxyl + 5'-phospho-(deoxyribonucleotide)m = (deoxyribonucleotide)n+m + AMP + beta-nicotinamide D-nucleotide.. In terms of biological role, DNA ligase that catalyzes the formation of phosphodiester linkages between 5'-phosphoryl and 3'-hydroxyl groups in double-stranded DNA using NAD as a coenzyme and as the energy source for the reaction. It is essential for DNA replication and repair of damaged DNA. The protein is DNA ligase of Leifsonia xyli subsp. xyli (strain CTCB07).